Reading from the N-terminus, the 387-residue chain is MKQAVIVDCIRTPMGRSKAGVFRNVRAETLSAELMKGLLLRNPQLDPNLIEDVIWGCVQQTLEQGFNIARNASLLAGIPKTAGAVTVNRLCGSSMDAIHQAARAIMTGMGDTFIIGGVEHMGHVPMSHGVDFHPGLANKVAKASGMMGLTAEMLGKLHGITREQQDAFAVRSHQRAYAATVEGRFAKEIYGIEGHDANGALIKVLQDEVIRPETTMESLAALRPVFDPVNGTVTAGTSSALSDGASAMLIMEESKARALGLPIRARIRSMAVAGCDAAIMGYGPVPATQKALARAGITVADLDVIELNEAFAAQSLPCVKDLGLADVVDDKINLNGGAIALGHPLGCSGARISTTLINLMEDKDATLGLATMCIGLGQGIATVFERV.

Residue Cys-91 is the Acyl-thioester intermediate of the active site. Active-site proton acceptor residues include His-343 and Cys-373.

This sequence belongs to the thiolase-like superfamily. Thiolase family. Heterotetramer of two alpha chains (FadB) and two beta chains (FadA).

The protein localises to the cytoplasm. The catalysed reaction is an acyl-CoA + acetyl-CoA = a 3-oxoacyl-CoA + CoA. It functions in the pathway lipid metabolism; fatty acid beta-oxidation. In terms of biological role, catalyzes the final step of fatty acid oxidation in which acetyl-CoA is released and the CoA ester of a fatty acid two carbons shorter is formed. The sequence is that of 3-ketoacyl-CoA thiolase from Shewanella baltica (strain OS155 / ATCC BAA-1091).